Reading from the N-terminus, the 154-residue chain is Large ribosomal subunit protein uL24 (154 aa).

Residues 97–154 (EIAARKNLPPPEVPEETSNDTKESDENVTGADKEETNEIKEEDLNDNEDKNNDGSQEA) form a disordered region. The span at 115–135 (NDTKESDENVTGADKEETNEI) shows a compositional bias: basic and acidic residues.

It belongs to the universal ribosomal protein uL24 family. In terms of assembly, part of the 50S ribosomal subunit.

Functionally, one of two assembly initiator proteins, it binds directly to the 5'-end of the 23S rRNA, where it nucleates assembly of the 50S subunit. In terms of biological role, located at the polypeptide exit tunnel on the outside of the subunit. This Picrophilus torridus (strain ATCC 700027 / DSM 9790 / JCM 10055 / NBRC 100828 / KAW 2/3) protein is Large ribosomal subunit protein uL24.